The following is a 372-amino-acid chain: DNA replication and repair protein RecF (372 aa).

30–37 (GENAQGKT) is a binding site for ATP.

Belongs to the RecF family.

The protein localises to the cytoplasm. The RecF protein is involved in DNA metabolism; it is required for DNA replication and normal SOS inducibility. RecF binds preferentially to single-stranded, linear DNA. It also seems to bind ATP. This chain is DNA replication and repair protein RecF, found in Geobacillus kaustophilus (strain HTA426).